Consider the following 65-residue polypeptide: Large ribosomal subunit protein bL35 (65 aa).

This sequence belongs to the bacterial ribosomal protein bL35 family.

The sequence is that of Large ribosomal subunit protein bL35 from Yersinia enterocolitica serotype O:8 / biotype 1B (strain NCTC 13174 / 8081).